The chain runs to 66 residues: Large ribosomal subunit protein uL29 (66 aa).

The protein belongs to the universal ribosomal protein uL29 family.

This is Large ribosomal subunit protein uL29 from Chelativorans sp. (strain BNC1).